Consider the following 352-residue polypeptide: Phosphoribosylformylglycinamidine cyclo-ligase (352 aa).

Belongs to the AIR synthase family.

It localises to the cytoplasm. It catalyses the reaction 2-formamido-N(1)-(5-O-phospho-beta-D-ribosyl)acetamidine + ATP = 5-amino-1-(5-phospho-beta-D-ribosyl)imidazole + ADP + phosphate + H(+). The protein operates within purine metabolism; IMP biosynthesis via de novo pathway; 5-amino-1-(5-phospho-D-ribosyl)imidazole from N(2)-formyl-N(1)-(5-phospho-D-ribosyl)glycinamide: step 2/2. The protein is Phosphoribosylformylglycinamidine cyclo-ligase of Pseudomonas savastanoi pv. phaseolicola (strain 1448A / Race 6) (Pseudomonas syringae pv. phaseolicola (strain 1448A / Race 6)).